A 104-amino-acid chain; its full sequence is Large ribosomal subunit protein uL24 (104 aa).

This sequence belongs to the universal ribosomal protein uL24 family. As to quaternary structure, part of the 50S ribosomal subunit.

In terms of biological role, one of two assembly initiator proteins, it binds directly to the 5'-end of the 23S rRNA, where it nucleates assembly of the 50S subunit. One of the proteins that surrounds the polypeptide exit tunnel on the outside of the subunit. This is Large ribosomal subunit protein uL24 from Sodalis glossinidius (strain morsitans).